A 266-amino-acid chain; its full sequence is DNA repair protein RecO (266 aa).

The protein belongs to the RecO family.

Its function is as follows. Involved in DNA repair and RecF pathway recombination. This chain is DNA repair protein RecO, found in Synechococcus elongatus (strain ATCC 33912 / PCC 7942 / FACHB-805) (Anacystis nidulans R2).